Here is a 700-residue protein sequence, read N- to C-terminus: Elongation factor G 2 (700 aa).

A tr-type G domain is found at 8-290; the sequence is ERYRNIGISA…AVVDYLPSPI (283 aa). GTP contacts are provided by residues 17 to 24, 88 to 92, and 142 to 145; these read AHIDAGKT, DTPGH, and NKMD.

Belongs to the TRAFAC class translation factor GTPase superfamily. Classic translation factor GTPase family. EF-G/EF-2 subfamily.

The protein resides in the cytoplasm. In terms of biological role, catalyzes the GTP-dependent ribosomal translocation step during translation elongation. During this step, the ribosome changes from the pre-translocational (PRE) to the post-translocational (POST) state as the newly formed A-site-bound peptidyl-tRNA and P-site-bound deacylated tRNA move to the P and E sites, respectively. Catalyzes the coordinated movement of the two tRNA molecules, the mRNA and conformational changes in the ribosome. This chain is Elongation factor G 2 (fusB), found in Ralstonia nicotianae (strain ATCC BAA-1114 / GMI1000) (Ralstonia solanacearum).